Reading from the N-terminus, the 313-residue chain is MKKQLIIGTRSSPLALWQAEYTKAELSRHFPDLDITLKLVKTTGDVLLDSPLSKIGDMGLFTKDIEKFLIAKEIDLAVHSLKDVPTATPEGLIISAFTEREDTRDVIISKNGVKMLDLPKNAKVATSSLRRMSQLKSLRPDFDIKDIRGNLNTRFQKFDEGEFDAMMLAYAGVYRLNFSDRISEILPHEIMLPAVGQGALGIETRVDDEQTREIVKVMNHSNTEYCCKAERSLLRHLQGGCQIPIGSYASFKNGTLHLLAFVGSVDGTKGIRNEITKTGLTSPAQAEAAGIELAEELLKQGAEEILSEIRKTC.

Cysteine 241 is subject to S-(dipyrrolylmethanemethyl)cysteine.

The protein belongs to the HMBS family. As to quaternary structure, monomer. Dipyrromethane is required as a cofactor.

It carries out the reaction 4 porphobilinogen + H2O = hydroxymethylbilane + 4 NH4(+). The protein operates within porphyrin-containing compound metabolism; protoporphyrin-IX biosynthesis; coproporphyrinogen-III from 5-aminolevulinate: step 2/4. Its pathway is porphyrin-containing compound metabolism; chlorophyll biosynthesis. Functionally, tetrapolymerization of the monopyrrole PBG into the hydroxymethylbilane pre-uroporphyrinogen in several discrete steps. The chain is Porphobilinogen deaminase from Chlorobium phaeovibrioides (strain DSM 265 / 1930) (Prosthecochloris vibrioformis (strain DSM 265)).